Consider the following 278-residue polypeptide: Large ribosomal subunit protein uL2 (278 aa).

2 disordered regions span residues 33-57 (LIRP…KGGG) and 224-278 (VVMN…GKKR). The span at 45-57 (AHGRITTRHKGGG) shows a compositional bias: basic residues. The segment covering 253-268 (PEGRTRKPNKASDKLI) has biased composition (basic and acidic residues). The segment covering 269 to 278 (VRRRRTGKKR) has biased composition (basic residues).

Belongs to the universal ribosomal protein uL2 family. In terms of assembly, part of the 50S ribosomal subunit. Forms a bridge to the 30S subunit in the 70S ribosome.

In terms of biological role, one of the primary rRNA binding proteins. Required for association of the 30S and 50S subunits to form the 70S ribosome, for tRNA binding and peptide bond formation. It has been suggested to have peptidyltransferase activity; this is somewhat controversial. Makes several contacts with the 16S rRNA in the 70S ribosome. In Mycobacteroides abscessus (strain ATCC 19977 / DSM 44196 / CCUG 20993 / CIP 104536 / JCM 13569 / NCTC 13031 / TMC 1543 / L948) (Mycobacterium abscessus), this protein is Large ribosomal subunit protein uL2.